The sequence spans 154 residues: Myoglobin (154 aa).

Residues 2 to 148 (GLSDGEWQLV…FRKDIAAKYK (147 aa)) enclose the Globin domain. At Ser4 the chain carries Phosphoserine. His65 contributes to the nitrite binding site. Position 65 (His65) interacts with O2. A Phosphothreonine modification is found at Thr68. Residue His94 coordinates heme b.

The protein belongs to the globin family. Monomeric.

The protein resides in the cytoplasm. The protein localises to the sarcoplasm. It carries out the reaction Fe(III)-heme b-[protein] + nitric oxide + H2O = Fe(II)-heme b-[protein] + nitrite + 2 H(+). The catalysed reaction is H2O2 + AH2 = A + 2 H2O. Its function is as follows. Monomeric heme protein which primary function is to store oxygen and facilitate its diffusion within muscle tissues. Reversibly binds oxygen through a pentacoordinated heme iron and enables its timely and efficient release as needed during periods of heightened demand. Depending on the oxidative conditions of tissues and cells, and in addition to its ability to bind oxygen, it also has a nitrite reductase activity whereby it regulates the production of bioactive nitric oxide. Under stress conditions, like hypoxia and anoxia, it also protects cells against reactive oxygen species thanks to its pseudoperoxidase activity. This is Myoglobin (MB) from Delphinus delphis (Short-beaked common dolphin).